The following is a 408-amino-acid chain: 3-hydroxy-3-methylglutaryl-coenzyme A reductase (408 aa).

Catalysis depends on charge relay system residues Glu101 and Asp307. His403 (proton donor) is an active-site residue.

The protein belongs to the HMG-CoA reductase family.

It carries out the reaction (R)-mevalonate + 2 NADP(+) + CoA = (3S)-3-hydroxy-3-methylglutaryl-CoA + 2 NADPH + 2 H(+). It participates in metabolic intermediate biosynthesis; (R)-mevalonate biosynthesis; (R)-mevalonate from acetyl-CoA: step 3/3. Converts HMG-CoA to mevalonate. This Pyrococcus abyssi (strain GE5 / Orsay) protein is 3-hydroxy-3-methylglutaryl-coenzyme A reductase (hmgA).